A 503-amino-acid polypeptide reads, in one-letter code: MSYPGYPPPAGGYPPAAPGGGPWGGAGYPPPSMPPIGLDNVANYAGQFNQDYLSGMAANMSGTFGGANVPNLYPGAPGGGYPPVPPGGFGQPPPAQQPVPPYGMYPPPGGNPPPGMPSYPAYPGAPVPGQPMPPTGQQPPGAYPGQPPMTYPGQSPMPPPGQQPVPSYPGYSGSSTITPAVPPAQFGNRGTITAASGFDPLRDAEVLRKAMKGFGTDEQAIIDCLGSRSNKQRQQILLSFKTAYGKDLIKDLKSELSGNFEKTILALMKTPVLFDVYEIKEAIKGAGTDEACLIEIFASRSNEHIRELSRAYKTEFQKTLEEAIRSDTSGHFQRLLISLSQGNRDESTNVDMSLVQRDVQELYAAGENRLGTDESKFNAILCSRSRAHLVAVFNEYQRMTGRDIEKSICREMSGDLEQGMLAVVKCLKNTPAFFAERLNKAMRGAGTKDRTLIRIMVSRSELDLLDIRAEYKRMYGKSLYHDITGDTSGDYRKILLKICGGND.

2 stretches are compositionally biased toward pro residues: residues 80-117 (GYPP…PGMP) and 123-167 (PGAP…PVPS). The disordered stretch occupies residues 80-172 (GYPPVPPGGF…QPVPSYPGYS (93 aa)). 4 Annexin repeats span residues 198–269 (FDPL…ALMK), 270–341 (TPVL…SLSQ), 353–425 (SLVQ…AVVK), and 429–500 (NTPA…KICG). 2 positions are modified to N6-acetyllysine: K246 and K253. K477 is modified (N6-acetyllysine).

This sequence belongs to the annexin family. Interacts with S100A6. Interacts with PDCD6 in a calcium-dependent manner. Interacts with KIF23 during cytokinesis.

The protein localises to the cytoplasm. The protein resides in the melanosome. It localises to the nucleus envelope. Its subcellular location is the nucleus. It is found in the nucleoplasm. The protein localises to the cytoskeleton. The protein resides in the spindle. In terms of biological role, required for midbody formation and completion of the terminal phase of cytokinesis. Binds specifically to calcyclin in a calcium-dependent manner. This is Annexin A11 (Anxa11) from Mus musculus (Mouse).